We begin with the raw amino-acid sequence, 336 residues long: Fructose-1,6-bisphosphatase class 1 (336 aa).

Residues Glu-90, Asp-112, Leu-114, and Asp-115 each coordinate Mg(2+). Residues 115-118 (DGSS), Asn-207, and Lys-273 each bind substrate. Glu-279 is a binding site for Mg(2+).

Belongs to the FBPase class 1 family. As to quaternary structure, homotetramer. It depends on Mg(2+) as a cofactor.

The protein resides in the cytoplasm. The enzyme catalyses beta-D-fructose 1,6-bisphosphate + H2O = beta-D-fructose 6-phosphate + phosphate. The protein operates within carbohydrate biosynthesis; gluconeogenesis. The sequence is that of Fructose-1,6-bisphosphatase class 1 from Xanthomonas axonopodis pv. citri (strain 306).